Reading from the N-terminus, the 61-residue chain is UPF0434 protein Sama_1339 (61 aa).

Belongs to the UPF0434 family.

The chain is UPF0434 protein Sama_1339 from Shewanella amazonensis (strain ATCC BAA-1098 / SB2B).